A 334-amino-acid chain; its full sequence is Glyceraldehyde-3-phosphate dehydrogenase (334 aa).

Residues 12–13 (TI) and glycine 111 contribute to the NAD(+) site. Residue 140-142 (SCN) participates in D-glyceraldehyde 3-phosphate binding. Residue cysteine 141 is the Nucleophile of the active site. NAD(+) is bound at residue arginine 167. 192-193 (HG) contacts D-glyceraldehyde 3-phosphate. NAD(+) is bound at residue glutamine 298.

Belongs to the glyceraldehyde-3-phosphate dehydrogenase family. Homotetramer.

It localises to the cytoplasm. The catalysed reaction is D-glyceraldehyde 3-phosphate + phosphate + NADP(+) = (2R)-3-phospho-glyceroyl phosphate + NADPH + H(+). The enzyme catalyses D-glyceraldehyde 3-phosphate + phosphate + NAD(+) = (2R)-3-phospho-glyceroyl phosphate + NADH + H(+). It functions in the pathway carbohydrate degradation; glycolysis; pyruvate from D-glyceraldehyde 3-phosphate: step 1/5. This is Glyceraldehyde-3-phosphate dehydrogenase from Thermococcus sibiricus (strain DSM 12597 / MM 739).